The following is a 286-amino-acid chain: L-rhamnose-binding lectin CSL1 (286 aa).

2 SUEL-type lectin domains span residues T96–L186 and T193–L280.

Its function is as follows. L-rhamnose binding lectin. Has hemagglutinating activity towards rabbit erythrocytes, but not human type B erythrocytes. Hemagglutinating activity is inhibited by smooth-type lipopolysaccharide (LPS) from K.pneumoniae, E.coli K-235, S.flexneri 1A, A.salmonicida and S.minnesota and rough-type LPS from S.flexneri, but not by rough-type LPS from E.coli K12 and E.coli EH100. Agglutinates E.coli K12 and B.subtilis. The chain is L-rhamnose-binding lectin CSL1 from Oncorhynchus keta (Chum salmon).